We begin with the raw amino-acid sequence, 720 residues long: Serrate RNA effector molecule (720 aa).

3 disordered regions span residues 1–192, 288–335, and 361–380; these read MADV…NPQR, LNKS…FTSD, and ENVL…LHSG. The span at 33–47 shows a compositional bias: low complexity; it reads SLPQQEQEQDQQQLP. Residues 48 to 76 are compositionally biased toward basic and acidic residues; that stretch reads LRRERDSRERRDERDIERPPPNRRERDRS. 3 positions are modified to phosphoserine: Ser76, Ser90, and Ser92. A compositionally biased stretch (basic residues) spans 99–115; sequence DRRHSPPQRRSPPQKRY. Basic and acidic residues-rich tracts occupy residues 116 to 126 and 136 to 164; these read RRDDNGYDGRR and PDRR…ERPH. Polar residues predominate over residues 288 to 297; the sequence is LNKSGRTSEP. A compositionally biased stretch (basic and acidic residues) spans 368-378; that stretch reads ETEKSGREKLH. Residues 498–523 form a C2H2-type zinc finger; the sequence is YGCGAKGCTKLFHAAEFVYKHLKLKH. Disordered regions lie at residues 543–622 and 666–687; these read YMND…AFGG and RDPS…APFL. Positions 570-607 are enriched in basic and acidic residues; sequence PSMENRLRDDRGGRRERDGRANGNDRNDRSEDQQRGDN. The segment covering 608-622 has biased composition (gly residues); that stretch reads DGGNPGEVGYDAFGG. Residue Ser689 is modified to Phosphoserine.

It belongs to the ARS2 family. As to quaternary structure, interacts with HYL1. Interacts with RCF3, RS40 and RS41. Expressed in shoot meristems and in emerging organ primordia throughout development.

Its subcellular location is the nucleus. The protein resides in the nucleus speckle. Acts as a mediator between the cap-binding complex (CBC) and both the pre-mRNA splicing and primary microRNAs (miRNAs) processing machinery. Required for proper processing of primary miRNAs to miRNAs, thereby playing a role in RNA-mediated gene silencing (RNAi) by miRNAs. Does not participate in sense post-transcriptional gene silencing. Acts as a regulator of meristem activity and adaxial leaf fate via the miRNA gene-silencing pathway by regulating the expression of PHB and by limiting the competence of shoot tissue to respond to KNOX expression. Its function is however not limited to miRNA-mediated repression of leaf polarity genes, but rather acts as a general regulator of primary microRNAs processing. Also critical for the accumulation of the trans-acting small interfering RNA (ta-siRNA). Required for pre-mRNA splicing. The polypeptide is Serrate RNA effector molecule (SE) (Arabidopsis thaliana (Mouse-ear cress)).